Here is a 501-residue protein sequence, read N- to C-terminus: Symplectin (501 aa).

Residues 20 to 287 enclose the CN hydrolase domain; that stretch reads PKTDMETREE…SKLLVAEILP (268 aa). Glu60 serves as the catalytic Proton acceptor. Residue Lys163 is the Proton donor of the active site. The Nucleophile role is filled by Cys196. Position 390 is an S-(coelenterazin-3a-yl)cysteine (Cys390).

This sequence belongs to the carbon-nitrogen hydrolase superfamily. BTD/VNN family. Photogenic gland (at protein level).

In terms of biological role, monovalent ion-dependent bioluminescence photoprotein. Displays an emission peak at 470 nm (blue light). Trace amounts of monovalent ion trigger the intramolecular oxidation of the chromophore, didehydrocoelenterazine, with the emission of light. This is Symplectin from Sthenoteuthis oualaniensis (Purpleback flying squid).